Consider the following 227-residue polypeptide: MKAVLLLSGGMDSLVTTAIAHREGYELAAMHVNYGQRTWQKELQSFRSIADHYSITERLEVNADFLGRIGGSSLTDHSMPVAGADLRGSGIPTSYVPFRNACFLSMAVSWSEVIGAERLFIGAVEEDSSGYPDCRRVFYDAFNRVIELGTRPETGITILTPLIAMQKAQIVRNGMELGAPFEHSWSCYRSEGRACGVCDSCARRLRAFELQGIRDPIDYEVRPQYID.

7–17 (LSGGMDSLVTT) contributes to the ATP binding site. 4 residues coordinate Zn(2+): Cys187, Cys195, Cys198, and Cys201.

This sequence belongs to the QueC family. The cofactor is Zn(2+).

The catalysed reaction is 7-carboxy-7-deazaguanine + NH4(+) + ATP = 7-cyano-7-deazaguanine + ADP + phosphate + H2O + H(+). Its pathway is purine metabolism; 7-cyano-7-deazaguanine biosynthesis. Catalyzes the ATP-dependent conversion of 7-carboxy-7-deazaguanine (CDG) to 7-cyano-7-deazaguanine (preQ(0)). The sequence is that of 7-cyano-7-deazaguanine synthase from Chlorobium luteolum (strain DSM 273 / BCRC 81028 / 2530) (Pelodictyon luteolum).